Reading from the N-terminus, the 400-residue chain is Lysophospholipid transporter LplT (400 aa).

12 helical membrane passes run 19-39 (VIVA…ATLA), 53-73 (VLQM…GQIA), 91-111 (AGAA…LVGI), 139-159 (LMEA…GVLA), 164-184 (IAAL…NLFI), 195-213 (SWRL…VVLW), 227-247 (LFWG…PVAL), 257-277 (YLNA…AKLV), 281-301 (TVSR…IFSL), 304-324 (ALLP…FFVV), 352-372 (NSAM…GVPA), and 373-393 (VAIG…LWIW).

This sequence belongs to the major facilitator superfamily. LplT (TC 2.A.1.42) family.

It is found in the cell inner membrane. In terms of biological role, catalyzes the facilitated diffusion of 2-acyl-glycero-3-phosphoethanolamine (2-acyl-GPE) into the cell. The sequence is that of Lysophospholipid transporter LplT from Salmonella heidelberg (strain SL476).